The primary structure comprises 248 residues: Mannose-binding protein C (248 aa).

Positions 1-20 (MSPFLSLPLLLLSVLSASYS) are cleaved as a signal peptide. The segment at 36-112 (IACSSPGING…GDSSLAASER (77 aa)) is disordered. Residues 42–99 (GINGFPGKDGRDGTKGEKGEPGQGLRGLQGPPGKLGPPGNPGPSGSPGAKGQKGDPGA) form the Collagen-like domain. P47 carries the 4-hydroxyproline modification. Residues 49 to 61 (KDGRDGTKGEKGE) are compositionally biased toward basic and acidic residues. Residues P73, P79, P82, and P88 each carry the 4-hydroxyproline modification. Residues 112–130 (RKALQTEMARIKKWVTFSL) are a coiled coil. A C-type lectin domain is found at 134-245 (VGKKLFLSNG…CSSSHLAICE (112 aa)). 2 disulfide bridges follow: C155-C244 and C222-C236.

As to quaternary structure, oligomeric complex of 3 or more homotrimers. Interacts with MASP1 and MASP2. Interacts with MEP1A and MEP1B and may inhibit their catalytic activity. Hydroxylation on proline residues within the sequence motif, GXPG, is most likely to be 4-hydroxy as this fits the requirement for 4-hydroxylation in vertebrates.

It localises to the secreted. Functionally, calcium-dependent lectin involved in innate immune defense. Binds mannose, fucose and N-acetylglucosamine on different microorganisms and activates the lectin complement pathway. Binds to late apoptotic cells, as well as to apoptotic blebs and to necrotic cells, but not to early apoptotic cells, facilitating their uptake by macrophages. In Saguinus oedipus (Cotton-top tamarin), this protein is Mannose-binding protein C (MBL2).